A 271-amino-acid polypeptide reads, in one-letter code: 3-methyl-2-oxobutanoate hydroxymethyltransferase (271 aa).

Positions 51 and 90 each coordinate Mg(2+). Residues 51 to 52, aspartate 90, and lysine 118 each bind 3-methyl-2-oxobutanoate; that span reads DS. Residue glutamate 120 participates in Mg(2+) binding. Glutamate 186 (proton acceptor) is an active-site residue.

This sequence belongs to the PanB family. As to quaternary structure, homodecamer; pentamer of dimers. The cofactor is Mg(2+).

It localises to the cytoplasm. The enzyme catalyses 3-methyl-2-oxobutanoate + (6R)-5,10-methylene-5,6,7,8-tetrahydrofolate + H2O = 2-dehydropantoate + (6S)-5,6,7,8-tetrahydrofolate. It participates in cofactor biosynthesis; (R)-pantothenate biosynthesis; (R)-pantoate from 3-methyl-2-oxobutanoate: step 1/2. Functionally, catalyzes the reversible reaction in which hydroxymethyl group from 5,10-methylenetetrahydrofolate is transferred onto alpha-ketoisovalerate to form ketopantoate. This Stenotrophomonas maltophilia (strain R551-3) protein is 3-methyl-2-oxobutanoate hydroxymethyltransferase.